Here is a 120-residue protein sequence, read N- to C-terminus: Late cornified envelope-like proline-rich protein 1 (120 aa).

It belongs to the cornifin (SPRR) family.

This chain is Late cornified envelope-like proline-rich protein 1 (Lelp1), found in Mus musculus (Mouse).